The primary structure comprises 547 residues: Probable high-affinity hexose transporter ght8, mitochondrial (547 aa).

The N-terminal 21 residues, methionine 1–glycine 21, are a transit peptide targeting the mitochondrion. Residues alanine 22–arginine 86 are Mitochondrial intermembrane-facing. A helical membrane pass occupies residues valine 87 to valine 107. Topologically, residues proline 108–glutamine 112 are cytoplasmic. The chain crosses the membrane as a helical span at residues isoleucine 113–glycine 133. At phenylalanine 134–arginine 144 the chain is on the mitochondrial intermembrane side. The helical transmembrane segment at glycine 145 to isoleucine 165 threads the bilayer. The Cytoplasmic portion of the chain corresponds to asparagine 166–arginine 179. The chain crosses the membrane as a helical span at residues valine 180 to proline 200. Over glutamate 201 to alanine 304 the chain is Mitochondrial intermembrane. A helical membrane pass occupies residues leucine 305–phenylalanine 325. The Cytoplasmic portion of the chain corresponds to glycine 326–arginine 328. The helical transmembrane segment at methionine 329–glycine 349 threads the bilayer. Residues asparagine 350–arginine 363 lie on the Mitochondrial intermembrane side of the membrane. The helical transmembrane segment at alanine 364–glycine 384 threads the bilayer. Topologically, residues proline 385 to alanine 404 are cytoplasmic. The chain crosses the membrane as a helical span at residues alanine 405–isoleucine 425. Over serine 426 to lysine 432 the chain is Mitochondrial intermembrane. A helical transmembrane segment spans residues tyrosine 433–histidine 453. Over glutamate 454–alanine 547 the chain is Cytoplasmic. The disordered stretch occupies residues glycine 482–alanine 547. The segment covering threonine 517–serine 529 has biased composition (low complexity). Residue serine 519 is modified to Phosphoserine. Phosphothreonine occurs at positions 523 and 526. Phosphoserine is present on residues serine 527, serine 528, serine 529, and serine 537.

It belongs to the major facilitator superfamily. Sugar transporter (TC 2.A.1.1) family.

It localises to the mitochondrion membrane. The chain is Probable high-affinity hexose transporter ght8, mitochondrial (ght8) from Schizosaccharomyces pombe (strain 972 / ATCC 24843) (Fission yeast).